A 205-amino-acid chain; its full sequence is ATP phosphoribosyltransferase (205 aa).

Belongs to the ATP phosphoribosyltransferase family. Short subfamily. Heteromultimer composed of HisG and HisZ subunits.

It localises to the cytoplasm. The enzyme catalyses 1-(5-phospho-beta-D-ribosyl)-ATP + diphosphate = 5-phospho-alpha-D-ribose 1-diphosphate + ATP. The protein operates within amino-acid biosynthesis; L-histidine biosynthesis; L-histidine from 5-phospho-alpha-D-ribose 1-diphosphate: step 1/9. Catalyzes the condensation of ATP and 5-phosphoribose 1-diphosphate to form N'-(5'-phosphoribosyl)-ATP (PR-ATP). Has a crucial role in the pathway because the rate of histidine biosynthesis seems to be controlled primarily by regulation of HisG enzymatic activity. The protein is ATP phosphoribosyltransferase of Vesicomyosocius okutanii subsp. Calyptogena okutanii (strain HA).